The sequence spans 551 residues: MSTASTPPINLFRRKKEHKRGITYTMLLCGPAGTGKTAFANNLLETKIFPHKYQYGKSNASISSNPEVKVIAPTKVVSFNSKNGIPSYVSEFDPMRANLEPGITITSTSLELGGNKDQGKPEMNEDDTVFFNLIMTHGIGENLDDSLCSEEVMSYLEQQFDIVLAEETRIKRNPRFEDTRVHVALYFIEPTGHGLREVDVELMKSISKYTNVLPIITRADSFTKEELTQFRKNIMFDVERYNVPIYKFEVDPEDDDLESMEENQALASLQPFAIITSDTRDSEGRYVREYPWGIISIDDDKISDLKVLKNVLFGSHLQEFKDTTQNLLYENYRSEKLSSVANAEEIGPNSTKRQSNAPSLSNFASLISTGQFNSSQTLANNLRADTPRNQVSGNFKENEYEDNGEHDSAENEQEMSPVRQLGREIKQENENLIRSIKTESSPKFLNSPDLPERTKLRNISETVPYVLRHERILARQQKLEELEAQSAKELQKRIQELERKAHELKLREKLINQNKLNGSSSSINSLQQSTRSQIKKNDTYTDLASIASGRD.

Position 2 is an N-acetylserine (Ser-2). The 320-residue stretch at 20 to 339 (RGITYTMLLC…ENYRSEKLSS (320 aa)) folds into the Septin-type G domain. The tract at residues 30–37 (GPAGTGKT) is G1 motif. Residues 30-37 (GPAGTGKT), Gly-138, 218-226 (RADSFTKEE), and Arg-288 contribute to the GTP site. The tract at residues 135–138 (MTHG) is G3 motif. The interval 217–220 (TRAD) is G4 motif. The segment at 381-417 (NLRADTPRNQVSGNFKENEYEDNGEHDSAENEQEMSP) is disordered. The residue at position 400 (Tyr-400) is a Phosphotyrosine. 2 positions are modified to phosphoserine: Ser-408 and Ser-416. A coiled-coil region spans residues 418–518 (VRQLGREIKQ…KLINQNKLNG (101 aa)). Glycyl lysine isopeptide (Lys-Gly) (interchain with G-Cter in SUMO) cross-links involve residues Lys-426 and Lys-437. 6 positions are modified to phosphoserine: Ser-447, Ser-460, Ser-519, Ser-520, Ser-522, and Ser-525. The tract at residues 515–551 (KLNGSSSSINSLQQSTRSQIKKNDTYTDLASIASGRD) is disordered. The span at 519-532 (SSSSINSLQQSTRS) shows a compositional bias: low complexity. Thr-539 bears the Phosphothreonine mark. Phosphoserine occurs at positions 545 and 548.

Belongs to the TRAFAC class TrmE-Era-EngA-EngB-Septin-like GTPase superfamily. Septin GTPase family. As to quaternary structure, component of the septin complex which consists of CDC3, CDC10, CDC11, CDC12 and probably SHS1 and rearranges to a cortical collar of highly ordered filaments at the mother-bud-neck. A complex formed by CDC3, CDC10, CDC11 and CDC12 is capable of forming long filaments in vitro and the components seem to be present in a 2:2:2:2 arrangement in vivo. The filaments are proposed to be formed by the end-to-end polymerization of CDC3-CDC12-CDC11 complexes with CDC10 serving as a bridge to bundle the polymers into paired filaments. Component of the GIN4 complex composed of at least BNI5, CDC3, CDC10, CDC11, CDC12, GIN4, NAP1 and SHS1. Self-associates. Interacts with CDC11 and SPA2. In terms of processing, phosphorylated by GIN4 and CLA4. Phosphorylation state is essential for septin ring dynamics during telophase. Post-translationally, sumoylated during mitosis on the mother cell side of the bud neck. Sumoylation probably plays a central role in regulating septin ring disassembly during the cell cycle.

The protein resides in the membrane. Its subcellular location is the bud neck. Septins are GTPases involved in cytokinesis that assemble early in the cell cycle as a patch at the incipient bud site and form a ring approximately 15 minutes before bud emergence, which transforms into an hour-glass shaped collar of cortical filaments that spans both sides of the mother-bud neck. This collar persists until just before cytokinesis, when it splits into two rings that occupy opposite sides of the neck. The septins at the bud neck serve as a structural scaffold that recruits different components involved in diverse processes at specific stages during the cell cycle. Many proteins bind asymmetrically to the septin collar. The septin assembly is regulated by protein kinases GIN4 and/or CLA4. May act by recruiting MYO1 and HOF1, a protein involved in septation, to the site of cleavage. Septins are also involved in cell morphogenesis, bud site selection, chitin deposition, cell cycle regulation, cell compartmentalization and spore wall formation. CDCd11 with SHS1 11 are involved in the recruitment of BNI5 and thereby ensure efficient localization at the bud neck of MYO1, the type II myosin of the actomyosin contractile ring. This Saccharomyces cerevisiae (strain ATCC 204508 / S288c) (Baker's yeast) protein is Seventh homolog of septin 1.